Reading from the N-terminus, the 1370-residue chain is DNA-directed RNA polymerase subunit beta (1370 aa).

Belongs to the RNA polymerase beta chain family. The RNAP catalytic core consists of 2 alpha, 1 beta, 1 beta' and 1 omega subunit. When a sigma factor is associated with the core the holoenzyme is formed, which can initiate transcription.

It catalyses the reaction RNA(n) + a ribonucleoside 5'-triphosphate = RNA(n+1) + diphosphate. DNA-dependent RNA polymerase catalyzes the transcription of DNA into RNA using the four ribonucleoside triphosphates as substrates. The chain is DNA-directed RNA polymerase subunit beta from Polaromonas naphthalenivorans (strain CJ2).